Consider the following 281-residue polypeptide: Large ribosomal subunit protein uL2 (281 aa).

The tract at residues 223-255 (TVRGSVMNPNDHPHGGGEGRAPIGRKSPVTPWG) is disordered.

Belongs to the universal ribosomal protein uL2 family. In terms of assembly, part of the 50S ribosomal subunit. Forms a bridge to the 30S subunit in the 70S ribosome.

Its function is as follows. One of the primary rRNA binding proteins. Required for association of the 30S and 50S subunits to form the 70S ribosome, for tRNA binding and peptide bond formation. It has been suggested to have peptidyltransferase activity; this is somewhat controversial. Makes several contacts with the 16S rRNA in the 70S ribosome. The polypeptide is Large ribosomal subunit protein uL2 (Mycoplasma capricolum subsp. capricolum (strain California kid / ATCC 27343 / NCTC 10154)).